Here is a 407-residue protein sequence, read N- to C-terminus: Guanine nucleotide-binding protein alpha-1 subunit (407 aa).

Glycine 2 carries N-myristoyl glycine lipidation. The S-palmitoyl cysteine moiety is linked to residue cysteine 3. A G-alpha domain is found at 73–407; it reads NDIKVLLLGA…MSNNLQSLMF (335 aa). The G1 motif stretch occupies residues 76–89; that stretch reads KVLLLGAGDSGKTT. GTP-binding residues include aspartate 84, serine 85, glycine 86, lysine 87, threonine 88, threonine 89, aspartate 190, leucine 215, threonine 221, glycine 243, asparagine 309, lysine 310, aspartate 312, and alanine 380. Threonine 88 is a Mg(2+) binding site. Residues 213–221 form a G2 motif region; it reads DILHCRIKT. Threonine 221 is a Mg(2+) binding site. A G3 motif region spans residues 236 to 245; the sequence is YRFFDVGGQR. Positions 305-312 are G4 motif; sequence ILFLNKLD. The segment at 378 to 383 is G5 motif; that stretch reads TTATDT.

It belongs to the G-alpha family. G(q) subfamily. As to quaternary structure, g proteins are composed of 3 units; alpha, beta and gamma. The alpha chain contains the guanine nucleotide binding site. Mg(2+) serves as cofactor.

Implicated in the mating and sporulation pathway. Probably coupled to mating-factor receptors. May act in concert with Ras1. The chain is Guanine nucleotide-binding protein alpha-1 subunit (gpa1) from Schizosaccharomyces pombe (strain 972 / ATCC 24843) (Fission yeast).